Reading from the N-terminus, the 808-residue chain is Protein tortoise (808 aa).

Positions Lys43–Leu78 form a coiled coil. Positions Leu152–Lys171 are disordered. Residues Glu694–Asp733 adopt a coiled-coil conformation.

It is found in the mitochondrion. Functionally, required for efficient chemotaxis. This is Protein tortoise (torA) from Dictyostelium discoideum (Social amoeba).